We begin with the raw amino-acid sequence, 583 residues long: Atlastin-2 (583 aa).

Residues 1–44 (MAEGDEAARGQQPHQGLWRRRRTSDPSAAVNHVSSTTSLGENYE) form a disordered region. The interval 1-60 (MAEGDEAARGQQPHQGLWRRRRTSDPSAAVNHVSSTTSLGENYEDDDLVNSDEVMKKPCP) is N-terminal hypervariable region (HVR). At 1–476 (MAEGDEAARG…NIFYAARTPA (476 aa)) the chain is on the cytoplasmic side. Ser-24 is subject to Phosphoserine. The region spanning 91–336 (DLNIVVVSVA…LVPLLLAPEN (246 aa)) is the GB1/RHD3-type G domain. Residues Arg-104, Lys-105, Gly-106, Lys-107, Ser-108, Phe-109, Gln-175, Arg-244, and Asp-245 each contribute to the GDP site. GTP is bound by residues Arg-104, Lys-105, Gly-106, Lys-107, Ser-108, and Phe-109. Ser-108 serves as a coordination point for Mg(2+). The GTP site is built by Arg-244 and Asp-245. The stretch at 256-284 (LEGGKQFLEKRLQVKQNQHEELQNVRKHI) forms a coiled coil. Lys-270 carries the N6-methyllysine modification. GDP is bound by residues Val-303 and Asn-306. Val-303 is a binding site for GTP. The 3HB (three-helix bundle) domain stretch occupies residues 374–465 (MLQATAEANN…YANFIKHNDG (92 aa)). The tract at residues 466 to 474 (KNIFYAART) is linker. Residues 477–497 (TLFAVMFAMYIISGLTGFIGL) form a helical membrane-spanning segment. Topologically, residues 498-499 (NS) are lumenal. A helical membrane pass occupies residues 500–520 (IAVLCNLVMGLALIFLCTWAY). Over 521 to 583 (VKYSGEFREI…VSHHARLKTD (63 aa)) the chain is Cytoplasmic. Positions 547-583 (KPLGDNLMEENIRQSVTNSIKAGLTDQVSHHARLKTD) are autoinhibitory domain.

It belongs to the TRAFAC class dynamin-like GTPase superfamily. GB1/RHD3 GTPase family. GB1 subfamily. Monomeric and homodimeric. The homodimer, transiently formed by two molecules on opposing membranes, is the active form mediating ER membrane fusion. Interacts with REEP5 and RTN3; these proteins are involved in endoplasmic reticulum tubular network organization. Interacts with ZFYVE27; both proteins are involved in endoplasmic reticulum tubular network organization. As to expression, expressed in peripheral tissues (at protein level).

It is found in the endoplasmic reticulum membrane. It catalyses the reaction GTP + H2O = GDP + phosphate + H(+). With respect to regulation, with its alternative C-terminus disrupting the autoinhibitory domain, this brain-specific isoform is probably more active at fusing ER membranes. Atlastin-2 (ATL2) is a membrane-anchored GTPase that mediates the GTP-dependent fusion of endoplasmic reticulum (ER) membranes, maintaining the continuous ER network. It facilitates the formation of three-way junctions where ER tubules intersect. Two atlastin-2 on neighboring ER tubules bind GTP and form loose homodimers through the GB1/RHD3-type G domains and 3HB regions. Upon GTP hydrolysis, the 3HB regions tighten, pulling the membranes together to drive their fusion. After fusion, the homodimer disassembles upon release of inorganic phosphate (Pi). Subsequently, GDP dissociates, resetting the monomers to a conformation ready for a new fusion cycle. The polypeptide is Atlastin-2 (Homo sapiens (Human)).